Consider the following 201-residue polypeptide: Protein GrpE (201 aa).

Positions 1–32 (MTDRDRQPEDTTAPTGEPVVSKPYIMPDDPEP) are disordered.

This sequence belongs to the GrpE family. As to quaternary structure, homodimer.

Its subcellular location is the cytoplasm. In terms of biological role, participates actively in the response to hyperosmotic and heat shock by preventing the aggregation of stress-denatured proteins, in association with DnaK and GrpE. It is the nucleotide exchange factor for DnaK and may function as a thermosensor. Unfolded proteins bind initially to DnaJ; upon interaction with the DnaJ-bound protein, DnaK hydrolyzes its bound ATP, resulting in the formation of a stable complex. GrpE releases ADP from DnaK; ATP binding to DnaK triggers the release of the substrate protein, thus completing the reaction cycle. Several rounds of ATP-dependent interactions between DnaJ, DnaK and GrpE are required for fully efficient folding. The polypeptide is Protein GrpE (Bradyrhizobium diazoefficiens (strain JCM 10833 / BCRC 13528 / IAM 13628 / NBRC 14792 / USDA 110)).